Reading from the N-terminus, the 461-residue chain is Vitamin K-dependent protein C (461 aa).

Residues 1–18 (MWQFRIFLLFASTWGISG) form the signal peptide. Positions 19–41 (VSAHPDPVFSSSEGAHQVLRVRR) are excised as a propeptide. The 46-residue stretch at 42–87 (ANSFLEEVRAGSLERECMEEICDFEEAQEIFQNVEDTLAFWIKYFD) folds into the Gla domain. Residues Glu-47, Glu-48, Glu-55, Glu-57, Glu-60, Glu-61, Glu-66, Glu-67, Glu-70, and Glu-76 each carry the 4-carboxyglutamate modification. Cysteines 58 and 63 form a disulfide. 9 disulfides stabilise this stretch: Cys-91–Cys-110, Cys-100–Cys-105, Cys-104–Cys-119, Cys-121–Cys-130, Cys-139–Cys-150, Cys-146–Cys-159, Cys-161–Cys-174, Cys-182–Cys-320, and Cys-239–Cys-255. EGF-like domains follow at residues 96-131 (LDHQ…RFCQ) and 135-175 (GFQD…MHCR). A (3R)-3-hydroxyaspartate modification is found at Asp-112. A Peptidase S1 domain is found at 213–450 (IVNGTLTKQG…YLKWIHSYIG (238 aa)). A glycan (N-linked (GlcNAc...) asparagine) is linked at Asn-215. His-254 acts as the Charge relay system in catalysis. N-linked (GlcNAc...) asparagine glycosylation is present at Asn-291. The active-site Charge relay system is the Asp-300. Asn-355 carries N-linked (GlcNAc...) asparagine glycosylation. Intrachain disulfides connect Cys-373–Cys-387 and Cys-398–Cys-426. Ser-402 acts as the Charge relay system in catalysis.

The protein belongs to the peptidase S1 family. Synthesized as a single chain precursor, which is cleaved into a light chain and a heavy chain held together by a disulfide bond. The enzyme is then activated by thrombin, which cleaves a tetradecapeptide from the amino end of the heavy chain; this reaction, which occurs at the surface of endothelial cells, is strongly promoted by thrombomodulin. In terms of processing, the vitamin K-dependent, enzymatic carboxylation of some Glu residues allows the modified protein to bind calcium. The iron and 2-oxoglutarate dependent 3-hydroxylation of aspartate and asparagine is (R) stereospecific within EGF domains. Plasma; synthesized in the liver.

Its subcellular location is the secreted. The protein resides in the golgi apparatus. The protein localises to the endoplasmic reticulum. The enzyme catalyses Degradation of blood coagulation factors Va and VIIIa.. In terms of biological role, protein C is a vitamin K-dependent serine protease that regulates blood coagulation by inactivating factors Va and VIIIa in the presence of calcium ions and phospholipids. Exerts a protective effect on the endothelial cell barrier function. The sequence is that of Vitamin K-dependent protein C (Proc) from Rattus norvegicus (Rat).